Reading from the N-terminus, the 410-residue chain is Histidine--tRNA ligase (410 aa).

The protein belongs to the class-II aminoacyl-tRNA synthetase family.

The protein resides in the cytoplasm. The catalysed reaction is tRNA(His) + L-histidine + ATP = L-histidyl-tRNA(His) + AMP + diphosphate + H(+). The polypeptide is Histidine--tRNA ligase (Methanocorpusculum labreanum (strain ATCC 43576 / DSM 4855 / Z)).